A 415-amino-acid polypeptide reads, in one-letter code: MPNKKAARNAYFFFALDMIPELRRRGLQVSGVREAIPLCSEDWALLSADQKEAYAEKARLLKNDPDSTSTYNDGVFGQRKRNATKSSDFSSVGFFQLNDQRNCVTQRTVPAMNIDISFNKNKAPDQHVCYFINIFSHGDMPSLCEQRYVPCEIACVRYSLREGILGSFHDFIDPGELPRGFRYHCQSGSASTHQIPISGFELANSDYHNMFRKLCSFVCPTPCPVVPVYTKANDIYRVDWCLQWLANKAGMENHFRVQEVETLIIKFYQDKLQEEPSRPTVSRLLDVVQWDYSSNTRCKWHEDNDMWCCALASCKKIAYCISKALASVYGVTLTPAHLPNPERSRNQNSVNPKVVVLDAKRFQRVCSSDPKYSTDKSERSSFEPRGVKPYQGPSGGGRGILRLLETLAASQNSSG.

The HMG box DNA-binding region spans 4-73; it reads KKAARNAYFF…DPDSTSTYND (70 aa). Residues 367 to 399 form a disordered region; sequence SSDPKYSTDKSERSSFEPRGVKPYQGPSGGGRG. Residues 372-386 show a composition bias toward basic and acidic residues; that stretch reads YSTDKSERSSFEPRG.

The protein belongs to the maelstrom family.

The protein localises to the cytoplasm. It localises to the nucleus. Its function is as follows. Plays a central role during spermatogenesis by repressing transposable elements and preventing their mobilization, which is essential for the germline integrity. Acts via the piRNA metabolic process, which mediates the repression of transposable elements during meiosis by forming complexes composed of piRNAs and Piwi proteins and governs the methylation and subsequent repression of transposons. Its association with piP-bodies suggests a participation in the secondary piRNAs metabolic process. Required for the localization of germ-cell factors to the meiotic nuage. This Xenopus tropicalis (Western clawed frog) protein is Protein maelstrom homolog (mael).